Reading from the N-terminus, the 175-residue chain is Shikimate kinase (175 aa).

12 to 17 (GAGKTT) serves as a coordination point for ATP. Mg(2+) is bound at residue Thr-16. Substrate-binding residues include Asp-34, Arg-58, and Gly-80. Arg-117 provides a ligand contact to ATP. Arg-136 lines the substrate pocket.

The protein belongs to the shikimate kinase family. As to quaternary structure, monomer. Mg(2+) is required as a cofactor.

It is found in the cytoplasm. The enzyme catalyses shikimate + ATP = 3-phosphoshikimate + ADP + H(+). The protein operates within metabolic intermediate biosynthesis; chorismate biosynthesis; chorismate from D-erythrose 4-phosphate and phosphoenolpyruvate: step 5/7. Catalyzes the specific phosphorylation of the 3-hydroxyl group of shikimic acid using ATP as a cosubstrate. The polypeptide is Shikimate kinase (Saccharopolyspora erythraea (strain ATCC 11635 / DSM 40517 / JCM 4748 / NBRC 13426 / NCIMB 8594 / NRRL 2338)).